A 206-amino-acid chain; its full sequence is Molybdopterin synthase catalytic subunit (206 aa).

Positions 1–23 (MATQQPTQTDNSAQAQPPQTNPA) are enriched in polar residues. The tract at residues 1–27 (MATQQPTQTDNSAQAQPPQTNPAKPTE) is disordered. Substrate-binding positions include 131–132 (HR), lysine 147, and 154–156 (KRE). Residues 177 to 188 (KVDEPRIGKGEV) are compositionally biased toward basic and acidic residues. A disordered region spans residues 177–206 (KVDEPRIGKGEVDEKEDEGDSGNGGNDRKS). Positions 197–206 (SGNGGNDRKS) are enriched in gly residues.

The protein belongs to the MoaE family. MOCS2B subfamily. In terms of assembly, heterotetramer; composed of 2 small (MOCS2A) and 2 large (MOCS2B) subunits.

The protein localises to the cytoplasm. It catalyses the reaction 2 [molybdopterin-synthase sulfur-carrier protein]-C-terminal-Gly-aminoethanethioate + cyclic pyranopterin phosphate + H2O = molybdopterin + 2 [molybdopterin-synthase sulfur-carrier protein]-C-terminal Gly-Gly + 2 H(+). The protein operates within cofactor biosynthesis; molybdopterin biosynthesis. Its function is as follows. Catalytic subunit of the molybdopterin synthase complex, a complex that catalyzes the conversion of precursor Z into molybdopterin. Acts by mediating the incorporation of 2 sulfur atoms from thiocarboxylated MOCS2A into precursor Z to generate a dithiolene group. In Neurospora crassa (strain ATCC 24698 / 74-OR23-1A / CBS 708.71 / DSM 1257 / FGSC 987), this protein is Molybdopterin synthase catalytic subunit (nit-8).